Reading from the N-terminus, the 880-residue chain is Leucine--tRNA ligase (880 aa).

The 'HIGH' region signature appears at 46-56; sequence PYPSGALHMGH. The 'KMSKS' region motif lies at 638–642; sequence KMSKS. Lysine 641 is a binding site for ATP.

Belongs to the class-I aminoacyl-tRNA synthetase family.

It localises to the cytoplasm. It carries out the reaction tRNA(Leu) + L-leucine + ATP = L-leucyl-tRNA(Leu) + AMP + diphosphate. The polypeptide is Leucine--tRNA ligase (Stenotrophomonas maltophilia (strain R551-3)).